The following is a 153-amino-acid chain: Mitotic-spindle organizing protein 2 (153 aa).

The disordered stretch occupies residues 80–153 (KVSETSTGDA…SSSSSQLTSN (74 aa)). Composition is skewed to polar residues over residues 81–99 (VSET…TAVP) and 107–133 (KMSS…SATR). Residues 134-153 (GQKSTKSSGSSSSSSQLTSN) show a composition bias toward low complexity.

This sequence belongs to the MOZART2 family. As to quaternary structure, part of the gamma-tubulin complex. Interacts with TUBG1.

It is found in the cytoplasm. Its subcellular location is the cytoskeleton. The protein localises to the microtubule organizing center. The protein resides in the centrosome. It localises to the spindle. This Danio rerio (Zebrafish) protein is Mitotic-spindle organizing protein 2 (mzt2).